The primary structure comprises 103 residues: UPF0145 protein CYA_2258 (103 aa).

Belongs to the UPF0145 family.

The sequence is that of UPF0145 protein CYA_2258 from Synechococcus sp. (strain JA-3-3Ab) (Cyanobacteria bacterium Yellowstone A-Prime).